Consider the following 1075-residue polypeptide: Protein EXPORTIN 1A (1075 aa).

Residues 37 to 103 (ADQILRDLQA…KNYISEVIVQ (67 aa)) enclose the Importin N-terminal domain. HEAT repeat units lie at residues 91 to 130 (DGMK…QIVK), 135 to 171 (AKWT…EVFD), 232 to 267 (IFES…LNFG), 336 to 373 (SLLL…ELFD), 388 to 425 (MGLQ…LMIN), 474 to 513 (DTEK…SMAE), 563 to 600 (KFLK…KCKR), 612 to 649 (PFVS…AESD), 682 to 719 (LKDQ…IFLD), 756 to 793 (RETL…DYAR), 798 to 835 (ARES…CTLE), and 894 to 934 (ETGL…VLTD).

It belongs to the exportin family. In terms of assembly, interacts with RAN1. In terms of tissue distribution, expressed ubiquitously, with higher levels in stems, inflorescences and roots. Present in mature pollen grains, unpollinated pistils, and 2-week-old seedlings.

The protein resides in the nucleus. The protein localises to the nuclear pore complex. It localises to the nucleus membrane. Its function is as follows. Receptor for the leucine-rich nuclear export signal (NES). Binds cooperatively to the NES on its target protein and to the small GTPase Ran in its active GTP-bound form. Required for the maternal-to-embryonic transition and during gametophyte development. Involved in heat-induced oxidative stress basal resistance. The protein is Protein EXPORTIN 1A of Arabidopsis thaliana (Mouse-ear cress).